A 163-amino-acid chain; its full sequence is Probable ribosome biogenesis protein RLP24 (163 aa).

The protein belongs to the eukaryotic ribosomal protein eL24 family. As to quaternary structure, associated with nucleolar and cytoplasmic pre-60S particles. At the end of biogenesis it dissociates from cytoplasmic pre-60S particles and is likely to be exchanged for its ribosomal homolog, RPL24.

The protein localises to the nucleus. It is found in the nucleolus. In terms of biological role, involved in the biogenesis of the 60S ribosomal subunit. Ensures the docking of GTPBP4/NOG1 to pre-60S particles. This chain is Probable ribosome biogenesis protein RLP24 (Rsl24d1), found in Rattus norvegicus (Rat).